Consider the following 298-residue polypeptide: 33 kDa chaperonin (298 aa).

Cystine bridges form between C237-C239 and C270-C273.

It belongs to the HSP33 family. In terms of processing, under oxidizing conditions two disulfide bonds are formed involving the reactive cysteines. Under reducing conditions zinc is bound to the reactive cysteines and the protein is inactive.

It localises to the cytoplasm. In terms of biological role, redox regulated molecular chaperone. Protects both thermally unfolding and oxidatively damaged proteins from irreversible aggregation. Plays an important role in the bacterial defense system toward oxidative stress. The chain is 33 kDa chaperonin from Enterococcus faecalis (strain ATCC 700802 / V583).